The sequence spans 78 residues: MATKDLTFEQAMEKLEGIVSKLEEGDVPLEKAIEYYQEGMNLSKLCSEKLNHVQDKMVQIMNEQGELEPFDIQEDSSS.

It belongs to the XseB family. In terms of assembly, heterooligomer composed of large and small subunits.

Its subcellular location is the cytoplasm. It carries out the reaction Exonucleolytic cleavage in either 5'- to 3'- or 3'- to 5'-direction to yield nucleoside 5'-phosphates.. In terms of biological role, bidirectionally degrades single-stranded DNA into large acid-insoluble oligonucleotides, which are then degraded further into small acid-soluble oligonucleotides. This is Exodeoxyribonuclease 7 small subunit from Oceanobacillus iheyensis (strain DSM 14371 / CIP 107618 / JCM 11309 / KCTC 3954 / HTE831).